We begin with the raw amino-acid sequence, 314 residues long: Short chain dehydrogenase atnD (314 aa).

Positions 41, 66, 90, and 116 each coordinate NADP(+). Residues S171 and Y204 each act as proton donor in the active site. Y204 and K208 together coordinate NADP(+). The Lowers pKa of active site Tyr role is filled by K208.

This sequence belongs to the short-chain dehydrogenases/reductases (SDR) family.

Its pathway is secondary metabolite biosynthesis. Short chain dehydrogenase; part of the gene cluster that mediates the biosynthesis of aspercryptins, linear lipopeptides built from six amino acids including 2 highly unusual and nonproteogenic amino acids, 2-amino-octanoic acid (2aoa) and 2-amino-dodecanol (2adol). The core structure of aspercryptins is as follows: Ser/Ala-Thr-Ile/Val-2aoa-Asn-2adol. The first step of aspercryptin biosynthesis is the generation of the fatty acid precursors, octanoic and dodecanoic acids, by the FAS subunits atnF and atnM. The fatty acid precursors are likely transformed into the corresponding alpha-amino fatty acids in three steps. First, they are hydroxylated by the cytochrome P450 monooxygenase atnE, then oxidized to the corresponding alpha-keto acids by the NAD(P)-dependent oxidoreductase atnD, and finally converted to the alpha-amino fatty acids by the PLP-dependent aminotransferases atnH or atnJ. the alpha-amino fatty acids, 2-amino-octanoic and 2-amino-dodecanoic acids, are recognized, activated, and covalently tethered to the NRPS atnA by its fourth and sixth adenylation domains. The second module of atnA is the Thr module and contains an epimerase (E) domain responsible for the epimerization of Thr to D-allo-Thr. Additionally, despite atnA having only one epimerase domain, the first amino acid of aspercryptin A1 is D-Ser, suggesting that serine is either loaded directly as D-Ser on the first module or that the epimerase domain in the threonine module epimerizes both L-Ser and L-Thr. After condensation of the hexapeptide of aspercryptin, the C-terminal reductase (TE) domain might be involved in the reductive release and production of the aldehyde hexapeptide. Further reduction would generate aspercryptins. The variety of aspercryptins produced reflects the flexibility of the atnA NRPS, allowing incorporation of alanine instead of serine, valine for isoleucine, and a C10 fatty amino alcohol instead of the C12 version. AtnB seems to be involved in the selectivity for Ile versus Val by the third module. Moreover, type B, C and D aspercryptins have an additional N-terminal cichorine, acetyl and propionyl group respectively. This chain is Short chain dehydrogenase atnD, found in Emericella nidulans (strain FGSC A4 / ATCC 38163 / CBS 112.46 / NRRL 194 / M139) (Aspergillus nidulans).